The following is a 1275-amino-acid chain: Myosin-1 (1275 aa).

One can recognise a Myosin motor domain in the interval 35-727 (VGVSDLTLLS…TLFAMEDMRD (693 aa)). 128-135 (GESGAGKT) contributes to the ATP binding site. Phosphoserine is present on Ser361. The actin-binding stretch occupies residues 410 to 493 (TIGILDIYGF…PGLFAALNDS (84 aa)). IQ domains follow at residues 731–751 (HNMA…KEDA) and 752–777 (ARLI…YGNG). The TH1 domain maps to 785 to 974 (RRRMSMLGSR…KSGTVSVRPG (190 aa)). Disordered stretches follow at residues 966–1064 (SGTV…LNNN), 1089–1128 (QNHN…AKPK), 1183–1230 (SECP…GGLS), and 1251–1275 (IADA…DDDW). Over residues 977–992 (PDSQNPKRPRATSSKV) the composition is skewed to polar residues. Residues 1095–1106 (PTAPSRPAKKAA) show a composition bias toward low complexity. Residues 1107 to 1121 (PAPPVKKTAPPPPPS) are compositionally biased toward pro residues. One can recognise an SH3 domain in the interval 1127 to 1187 (PKWPTFKANY…PTAYISECPP (61 aa)). Over residues 1254–1263 (ALKKRSATRD) the composition is skewed to basic and acidic residues. The segment covering 1264–1275 (SDDEEEDDDDDW) has biased composition (acidic residues).

The protein belongs to the TRAFAC class myosin-kinesin ATPase superfamily. Myosin family. Post-translationally, phosphorylation of the TEDS site (Ser-361) is required for the polarization of the actin cytoskeleton. Phosphorylation probably activates the myosin-I ATPase activity.

The protein localises to the cytoplasm. The protein resides in the cytoskeleton. It localises to the actin patch. Type-I myosin implicated in the organization of the actin cytoskeleton. Required for proper actin cytoskeleton polarization. At the cell cortex, assembles in patch-like structures together with proteins from the actin-polymerizing machinery and promotes actin assembly. Functions as actin nucleation-promoting factor (NPF) for the Arp2/3 complex. This Meyerozyma guilliermondii (strain ATCC 6260 / CBS 566 / DSM 6381 / JCM 1539 / NBRC 10279 / NRRL Y-324) (Yeast) protein is Myosin-1 (MYO1).